We begin with the raw amino-acid sequence, 117 residues long: Immunoglobulin heavy variable 7-4-1 (117 aa).

A signal peptide spans 1–19; sequence MDWTWRILFLVAAATGAHS. The tract at residues 20–44 is framework-1; that stretch reads QVQLVQSGSELKKPGASVKVSCKAS. The 98-residue stretch at 20–117 folds into the Ig-like domain; that stretch reads QVQLVQSGSE…EDTAVYYCAR (98 aa). C41 and C115 form a disulfide bridge. The interval 45–52 is complementarity-determining-1; it reads GYTFTSYA. Residues 53 to 69 form a framework-2 region; sequence MNWVRQAPGQGLEWMGW. The segment at 70–77 is complementarity-determining-2; it reads INTNTGNP. A framework-3 region spans residues 78–115; that stretch reads TYAQGFTGRFVFSLDTSVSTAYLQICSLKAEDTAVYYC. The segment at 116–117 is complementarity-determining-3; it reads AR.

Immunoglobulins are composed of two identical heavy chains and two identical light chains; disulfide-linked.

Its subcellular location is the secreted. The protein localises to the cell membrane. Its function is as follows. V region of the variable domain of immunoglobulin heavy chains that participates in the antigen recognition. Immunoglobulins, also known as antibodies, are membrane-bound or secreted glycoproteins produced by B lymphocytes. In the recognition phase of humoral immunity, the membrane-bound immunoglobulins serve as receptors which, upon binding of a specific antigen, trigger the clonal expansion and differentiation of B lymphocytes into immunoglobulins-secreting plasma cells. Secreted immunoglobulins mediate the effector phase of humoral immunity, which results in the elimination of bound antigens. The antigen binding site is formed by the variable domain of one heavy chain, together with that of its associated light chain. Thus, each immunoglobulin has two antigen binding sites with remarkable affinity for a particular antigen. The variable domains are assembled by a process called V-(D)-J rearrangement and can then be subjected to somatic hypermutations which, after exposure to antigen and selection, allow affinity maturation for a particular antigen. This is Immunoglobulin heavy variable 7-4-1 from Homo sapiens (Human).